Reading from the N-terminus, the 353-residue chain is uncharacterized protein (353 aa).

The protein belongs to the mimivirus L17x/L18x family.

This is an uncharacterized protein from Acanthamoeba polyphaga (Amoeba).